A 150-amino-acid polypeptide reads, in one-letter code: SsrA-binding protein (150 aa).

This sequence belongs to the SmpB family.

It is found in the cytoplasm. In terms of biological role, required for rescue of stalled ribosomes mediated by trans-translation. Binds to transfer-messenger RNA (tmRNA), required for stable association of tmRNA with ribosomes. tmRNA and SmpB together mimic tRNA shape, replacing the anticodon stem-loop with SmpB. tmRNA is encoded by the ssrA gene; the 2 termini fold to resemble tRNA(Ala) and it encodes a 'tag peptide', a short internal open reading frame. During trans-translation Ala-aminoacylated tmRNA acts like a tRNA, entering the A-site of stalled ribosomes, displacing the stalled mRNA. The ribosome then switches to translate the ORF on the tmRNA; the nascent peptide is terminated with the 'tag peptide' encoded by the tmRNA and targeted for degradation. The ribosome is freed to recommence translation, which seems to be the essential function of trans-translation. The polypeptide is SsrA-binding protein (Magnetococcus marinus (strain ATCC BAA-1437 / JCM 17883 / MC-1)).